We begin with the raw amino-acid sequence, 372 residues long: NAD(P)H-quinone oxidoreductase subunit 1 (372 aa).

The next 8 membrane-spanning stretches (helical) occupy residues 27–47 (IIWL…GVLV), 97–117 (ILFT…WLIV), 128–148 (VGIG…GLLM), 176–196 (LALS…IDIV), 204–224 (ILSW…ICAL), 266–286 (ILSA…PIPV), 308–328 (SIGI…AILL), and 347–367 (FLLP…LAFP).

It belongs to the complex I subunit 1 family. As to quaternary structure, NDH-1 is composed of at least 11 different subunits.

The protein localises to the cellular thylakoid membrane. The enzyme catalyses a plastoquinone + NADH + (n+1) H(+)(in) = a plastoquinol + NAD(+) + n H(+)(out). It carries out the reaction a plastoquinone + NADPH + (n+1) H(+)(in) = a plastoquinol + NADP(+) + n H(+)(out). Functionally, NDH-1 shuttles electrons from an unknown electron donor, via FMN and iron-sulfur (Fe-S) centers, to quinones in the respiratory and/or the photosynthetic chain. The immediate electron acceptor for the enzyme in this species is believed to be plastoquinone. Couples the redox reaction to proton translocation, and thus conserves the redox energy in a proton gradient. The polypeptide is NAD(P)H-quinone oxidoreductase subunit 1 (Prochlorococcus marinus (strain MIT 9301)).